The primary structure comprises 452 residues: tRNA(Ile)-lysidine synthase (452 aa).

Position 27-32 (27-32 (SGGIDS)) interacts with ATP.

The protein belongs to the tRNA(Ile)-lysidine synthase family.

The protein localises to the cytoplasm. It catalyses the reaction cytidine(34) in tRNA(Ile2) + L-lysine + ATP = lysidine(34) in tRNA(Ile2) + AMP + diphosphate + H(+). Its function is as follows. Ligates lysine onto the cytidine present at position 34 of the AUA codon-specific tRNA(Ile) that contains the anticodon CAU, in an ATP-dependent manner. Cytidine is converted to lysidine, thus changing the amino acid specificity of the tRNA from methionine to isoleucine. The chain is tRNA(Ile)-lysidine synthase from Persephonella marina (strain DSM 14350 / EX-H1).